An 883-amino-acid chain; its full sequence is Valine--tRNA ligase (883 aa).

Positions 46–56 (PNVTGKLHLGH) match the 'HIGH' region motif. Residues 520–524 (KMSKS) carry the 'KMSKS' region motif. Lysine 523 provides a ligand contact to ATP. Residues 809–844 (LADLLNVEEELARLEKELAKWQKELDMVGKKLSNER) are a coiled coil.

This sequence belongs to the class-I aminoacyl-tRNA synthetase family. ValS type 1 subfamily. In terms of assembly, monomer.

It localises to the cytoplasm. It carries out the reaction tRNA(Val) + L-valine + ATP = L-valyl-tRNA(Val) + AMP + diphosphate. Catalyzes the attachment of valine to tRNA(Val). As ValRS can inadvertently accommodate and process structurally similar amino acids such as threonine, to avoid such errors, it has a 'posttransfer' editing activity that hydrolyzes mischarged Thr-tRNA(Val) in a tRNA-dependent manner. In Streptococcus agalactiae serotype V (strain ATCC BAA-611 / 2603 V/R), this protein is Valine--tRNA ligase.